Consider the following 125-residue polypeptide: Plastocyanin (125 aa).

The first 34 residues, M1–A34, serve as a signal peptide directing secretion. Positions Q35–Q125 constitute a Plastocyanin-like domain. Residues H73, C110, H113, and M118 each contribute to the Cu cation site.

The protein belongs to the plastocyanin family. Requires Cu(2+) as cofactor.

It localises to the cellular thylakoid membrane. In terms of biological role, participates in electron transfer between P700 and the cytochrome b6-f complex in photosystem I. The sequence is that of Plastocyanin (petE) from Synechococcus elongatus (strain ATCC 33912 / PCC 7942 / FACHB-805) (Anacystis nidulans R2).